Here is an 846-residue protein sequence, read N- to C-terminus: Enhancer of polycomb-like protein 1 (846 aa).

5 disordered regions span residues Phe-169–Ala-204, Thr-391–Ala-466, Glu-587–Met-609, Ala-682–Asn-702, and Gln-759–Gln-804. Basic and acidic residues predominate over residues Val-180–Asp-203. The segment covering Pro-411–Ser-426 has biased composition (polar residues). Residues Thr-432 to Glu-452 are compositionally biased toward basic and acidic residues. Residues Lys-434–Ala-490 adopt a coiled-coil conformation. The segment covering Lys-686–Asn-702 has biased composition (pro residues). The segment covering Gln-759–Gln-773 has biased composition (low complexity). The span at Thr-774 to Leu-796 shows a compositional bias: polar residues.

This sequence belongs to the enhancer of polycomb family. Component of the NuA4 histone acetyltransferase complex.

The protein resides in the nucleus. Functionally, component of the NuA4 histone acetyltransferase complex which is involved in transcriptional activation of selected genes principally by acetylation of nucleosomal histone H4 and H2A. The NuA4 complex is also involved in DNA repair. Involved in gene silencing by neighboring heterochromatin, blockage of the silencing spreading along the chromosome, and required for cell cycle progression through G2/M. This Cryptococcus neoformans var. neoformans serotype D (strain B-3501A) (Filobasidiella neoformans) protein is Enhancer of polycomb-like protein 1 (EPL1).